The primary structure comprises 89 residues: Small ribosomal subunit protein uS15 (89 aa).

The tract at residues 1–25 (MSLDTTEKQQLINTHQTHGTDTGSA) is disordered. Residues 8 to 25 (KQQLINTHQTHGTDTGSA) are compositionally biased toward polar residues.

The protein belongs to the universal ribosomal protein uS15 family. Part of the 30S ribosomal subunit. Forms a bridge to the 50S subunit in the 70S ribosome, contacting the 23S rRNA.

In terms of biological role, one of the primary rRNA binding proteins, it binds directly to 16S rRNA where it helps nucleate assembly of the platform of the 30S subunit by binding and bridging several RNA helices of the 16S rRNA. Its function is as follows. Forms an intersubunit bridge (bridge B4) with the 23S rRNA of the 50S subunit in the ribosome. This chain is Small ribosomal subunit protein uS15, found in Synechococcus sp. (strain CC9605).